The following is a 226-amino-acid chain: Thioredoxin domain-containing protein 9 (226 aa).

One can recognise a Thioredoxin domain in the interval 75–180 (EIGSERDFFQ…TTETLEWRLG (106 aa)). Phosphoserine is present on residues serine 188, serine 221, and serine 223.

As to quaternary structure, forms ternary complexes with the chaperonin TCP1 complex, spanning the cylindrical chaperonin cavity and contacting at least 2 subunits. In terms of tissue distribution, expressed in testis, liver, heart, kidney, brain, spleen and lung.

The protein resides in the cytoplasm. It is found in the nucleus. It localises to the cytoskeleton. Its subcellular location is the microtubule organizing center. The protein localises to the centrosome. The protein resides in the midbody. In terms of biological role, significantly diminishes the chaperonin TCP1 complex ATPase activity, thus negatively impacts protein folding, including that of actin or tubulin. The sequence is that of Thioredoxin domain-containing protein 9 (Txndc9) from Mus musculus (Mouse).